A 780-amino-acid chain; its full sequence is Catenin beta-1 (780 aa).

Residues 34–56 (GIHSGATTTAPSLSGKGNPEDDD) are disordered. ARM repeat units lie at residues 140 to 179 (NYQD…QLSK), 224 to 263 (REGL…NLLL), 266 to 305 (EGAK…ILAY), 350 to 389 (SSNK…NLSD), 399 to 430 (GLLG…TCNN), 431 to 472 (YKNK…HLTS), 478 to 518 (EMAQ…NLAL), 520 to 561 (PANH…QFVE), 583 to 622 (IHNR…ELAQ), and 624 to 663 (KEAA…RMSE). Residues 735–744 (EHEMAGHHPG) show a composition bias toward basic and acidic residues. The disordered stretch occupies residues 735-770 (EHEMAGHHPGPDYPVDGLPDLGHTQDLIDGLPPGDS).

The protein belongs to the beta-catenin family. As to quaternary structure, interacts with adnpa. Interacts with cdh1 during oogenesis and in the unfertilized egg. Interacts with ctnna1 and cdh2. Post-translationally, phosphorylation by gsk3b promotes ubiquitination and subsequent degradation by the proteasome. In terms of processing, ubiquitinated when phosphorylated by gsk3b, leading to its degradation. As to expression, expressed in the successional lamina, also expressed in both the epithelial and mesenchymal cells of the developing replacement tooth (at protein level). Expressed in the enamel organ as well as in the inner and outer dental epithelium during replacement tooth morphogenesis (at protein level). Expressed in the differentiated, polarized odontoblasts that line the dentine matrix as well as in the inner and outer dental epithelium during tooth cytodifferentiation (at protein level). Expressed in the reduced enamel organ, odontoblasts and weakly at the center of the dental papilla of the functional tooth as well as in the epithelial crypts surrounding the functional tooth (at protein level). Expressed in the liver (at protein level). Expressed at intercalated disks in the heart (at protein level). Expressed in the ovary.

Its subcellular location is the cytoplasm. The protein resides in the nucleus. The protein localises to the cell membrane. It localises to the cell junction. It is found in the adherens junction. Its function is as follows. Key downstream component of the canonical Wnt signaling pathway. In the absence of Wnt, forms a complex with axin1, axin2, apc, csnk1a1 and gsk3b that promotes phosphorylation on N-terminal Ser and Thr residues and ubiquitination of ctnnb1 and its subsequent degradation by the proteasome. In the presence of Wnt ligand, ctnnb1 is not ubiquitinated and accumulates in the nucleus, where it acts as a coactivator for transcription factors of the TCF/LEF family, leading to activate Wnt responsive genes. Plays a key role in dorsoventral patterning: in prospective ventral blastomeres, its down-regulation by axin1 and axin2 leads to inhibit the Wnt signaling pathway, while in prospective dorsal blastomeres, degradation of axin results in stabilization and nuclear translocation of ctnnb1. This is Catenin beta-1 from Danio rerio (Zebrafish).